The chain runs to 58 residues: Small ribosomal subunit protein bS21 (58 aa).

Over residues 31–42 the composition is skewed to basic and acidic residues; the sequence is EIRKREHYEKPS. The disordered stretch occupies residues 31–58; sequence EIRKREHYEKPSVKRKKKSEAARKRKYN. Over residues 43 to 58 the composition is skewed to basic residues; the sequence is VKRKKKSEAARKRKYN.

This sequence belongs to the bacterial ribosomal protein bS21 family.

This chain is Small ribosomal subunit protein bS21, found in Agathobacter rectalis (strain ATCC 33656 / DSM 3377 / JCM 17463 / KCTC 5835 / VPI 0990) (Eubacterium rectale).